Here is a 46-residue protein sequence, read N- to C-terminus: Peroxidase 1 (46 aa).

Belongs to the peroxidase family. Classical plant (class III) peroxidase subfamily. Requires heme b as cofactor. Ca(2+) is required as a cofactor.

It localises to the secreted. It carries out the reaction 2 a phenolic donor + H2O2 = 2 a phenolic radical donor + 2 H2O. Removal of H(2)O(2), oxidation of toxic reductants, biosynthesis and degradation of lignin, suberization, auxin catabolism, response to environmental stresses such as wounding, pathogen attack and oxidative stress. These functions might be dependent on each isozyme/isoform in each plant tissue. In Catharanthus roseus (Madagascar periwinkle), this protein is Peroxidase 1.